Consider the following 418-residue polypeptide: Homeobox protein H2.0 (418 aa).

The span at 190-216 (QHQKQQHQQHHHHQHHPKHLHQQHKPP) shows a compositional bias: basic residues. Disordered stretches follow at residues 190 to 223 (QHQK…STTA), 259 to 296 (TSPA…RKRS), and 354 to 418 (RENL…NVVE). A compositionally biased stretch (low complexity) spans 259-273 (TSPAAAAAATSQNGA). A DNA-binding region (homeobox) is located at residues 295-354 (RSWSRAVFSNLQRKGLEIQFQQQKYITKPDRRKLAARLNLTDAQVKVWFQNRRMKWRHTR). Residues 391–403 (DYSSDSCSSVDLS) show a composition bias toward low complexity.

The protein belongs to the H2.0 homeobox family. In terms of tissue distribution, expressed in cells of the visceral musculature and its anlagen.

Its subcellular location is the nucleus. May play a role in pattern formation during embryonic and imaginal development. Is not essential for visceral muscle morphogenesis. The polypeptide is Homeobox protein H2.0 (H2.0) (Drosophila melanogaster (Fruit fly)).